Here is a 79-residue protein sequence, read N- to C-terminus: UPF0180 protein BCAH820_1484 (79 aa).

It belongs to the UPF0180 family.

This chain is UPF0180 protein BCAH820_1484, found in Bacillus cereus (strain AH820).